A 154-amino-acid chain; its full sequence is Transcription antitermination protein NusB (154 aa).

Belongs to the NusB family.

Its function is as follows. Involved in transcription antitermination. Required for transcription of ribosomal RNA (rRNA) genes. Binds specifically to the boxA antiterminator sequence of the ribosomal RNA (rrn) operons. This is Transcription antitermination protein NusB from Oleidesulfovibrio alaskensis (strain ATCC BAA-1058 / DSM 17464 / G20) (Desulfovibrio alaskensis).